Here is a 101-residue protein sequence, read N- to C-terminus: uncharacterized protein (101 aa).

The chain crosses the membrane as a helical span at residues Val77–Ile99.

The protein resides in the membrane. This is an uncharacterized protein from Acanthamoeba polyphaga mimivirus (APMV).